Reading from the N-terminus, the 732-residue chain is Polyribonucleotide nucleotidyltransferase (732 aa).

The Mg(2+) site is built by D489 and D495. Residues 556–615 (PKIDTIQIDVDKIKIVIGKGGETIDKIIAETGVKIDIDEEGLVQIFSSDQAAIDRTKEII) form the KH domain. An S1 motif domain is found at 625-693 (GEVYHAKVVR…DKGRVDASMK (69 aa)). The tract at residues 691–732 (SMKALIPRPPKPEKKEEKASEAKEASNDQASKSQSETASEEK) is disordered. The segment covering 700-716 (PKPEKKEEKASEAKEAS) has biased composition (basic and acidic residues). Residues 717–732 (NDQASKSQSETASEEK) are compositionally biased toward polar residues.

Belongs to the polyribonucleotide nucleotidyltransferase family. Mg(2+) is required as a cofactor.

Its subcellular location is the cytoplasm. It catalyses the reaction RNA(n+1) + phosphate = RNA(n) + a ribonucleoside 5'-diphosphate. Involved in mRNA degradation. Catalyzes the phosphorolysis of single-stranded polyribonucleotides processively in the 3'- to 5'-direction. This chain is Polyribonucleotide nucleotidyltransferase, found in Streptococcus uberis (strain ATCC BAA-854 / 0140J).